The chain runs to 294 residues: Glycine--tRNA ligase alpha subunit (294 aa).

This sequence belongs to the class-II aminoacyl-tRNA synthetase family. Tetramer of two alpha and two beta subunits.

Its subcellular location is the cytoplasm. The catalysed reaction is tRNA(Gly) + glycine + ATP = glycyl-tRNA(Gly) + AMP + diphosphate. This chain is Glycine--tRNA ligase alpha subunit, found in Natranaerobius thermophilus (strain ATCC BAA-1301 / DSM 18059 / JW/NM-WN-LF).